We begin with the raw amino-acid sequence, 198 residues long: Nucleoid occlusion factor SlmA (198 aa).

One can recognise an HTH tetR-type domain in the interval 10–70 (NRREEILQSL…SLIEFIEDSL (61 aa)). Positions 33 to 52 (TTAKLAASVGVSEAALYRHF) form a DNA-binding region, H-T-H motif. The stretch at 117 to 144 (EQDRLQGRINQLFERIEAQLRQVLREKR) forms a coiled coil.

The protein belongs to the nucleoid occlusion factor SlmA family. As to quaternary structure, homodimer. Interacts with FtsZ.

Its subcellular location is the cytoplasm. It localises to the nucleoid. Required for nucleoid occlusion (NO) phenomenon, which prevents Z-ring formation and cell division over the nucleoid. Acts as a DNA-associated cell division inhibitor that binds simultaneously chromosomal DNA and FtsZ, and disrupts the assembly of FtsZ polymers. SlmA-DNA-binding sequences (SBS) are dispersed on non-Ter regions of the chromosome, preventing FtsZ polymerization at these regions. The chain is Nucleoid occlusion factor SlmA from Salmonella dublin (strain CT_02021853).